The following is an 87-amino-acid chain: Small ribosomal subunit protein bS20 (87 aa).

The protein belongs to the bacterial ribosomal protein bS20 family.

Binds directly to 16S ribosomal RNA. This is Small ribosomal subunit protein bS20 from Corynebacterium urealyticum (strain ATCC 43042 / DSM 7109).